Reading from the N-terminus, the 277-residue chain is MNPYLNAFLRSIIEAITEFLPVSSTGHLFLFSSFFPFYGENVEFDDLFDIFIQSGAILSVLFLYREKFKSQIVSSFRYILKQNSDSEGFHFLIQICIGAFPILIAGFIAKKFLDTIKARPDLLEILSGAWIFGGVLILVAEWYFHQRPEEKKSIGFKDSILIGIFQCMALIPGMSRSAATIITARFLGKDTKSSAEFSFFLAVPVLLAAGIYKLIKYRSILNGNTIPVLMFGFLVSFLLCTLVIRWFLRYIQKHSFSVFGVYRILLGVGVLVLTKLI.

8 helical membrane passes run 19 to 39, 44 to 64, 89 to 109, 122 to 142, 154 to 174, 195 to 215, 224 to 244, and 257 to 277; these read FLPV…PFYG, FDDL…LFLY, FHFL…GFIA, LLEI…VAEW, IGFK…IPGM, AEFS…YKLI, NTIP…TLVI, and SVFG…TKLI.

The protein belongs to the UppP family.

It localises to the cell inner membrane. The enzyme catalyses di-trans,octa-cis-undecaprenyl diphosphate + H2O = di-trans,octa-cis-undecaprenyl phosphate + phosphate + H(+). In terms of biological role, catalyzes the dephosphorylation of undecaprenyl diphosphate (UPP). Confers resistance to bacitracin. This Leptospira interrogans serogroup Icterohaemorrhagiae serovar copenhageni (strain Fiocruz L1-130) protein is Undecaprenyl-diphosphatase.